Reading from the N-terminus, the 226-residue chain is Ribonuclease 3 (226 aa).

Positions 6 to 128 (MKKLQKFIGY…IIASIFLDSN (123 aa)) constitute an RNase III domain. A Mg(2+)-binding site is contributed by E41. Residue D45 is part of the active site. N114 and E117 together coordinate Mg(2+). E117 is a catalytic residue. The 71-residue stretch at 155-225 (DPKTRLQEYL…AQNALIRLEV (71 aa)) folds into the DRBM domain.

The protein belongs to the ribonuclease III family. In terms of assembly, homodimer. Mg(2+) serves as cofactor.

Its subcellular location is the cytoplasm. It carries out the reaction Endonucleolytic cleavage to 5'-phosphomonoester.. Digests double-stranded RNA. Involved in the processing of primary rRNA transcript to yield the immediate precursors to the large and small rRNAs (23S and 16S). Processes some mRNAs, and tRNAs when they are encoded in the rRNA operon. Processes pre-crRNA and tracrRNA of type II CRISPR loci if present in the organism. The sequence is that of Ribonuclease 3 from Buchnera aphidicola subsp. Cinara cedri (strain Cc).